We begin with the raw amino-acid sequence, 201 residues long: Holliday junction branch migration complex subunit RuvA (201 aa).

The domain I stretch occupies residues Met1–Leu64. Positions Thr65–Glu143 are domain II. The flexible linker stretch occupies residues Ile144–His154. Positions His154 to Asn201 are domain III.

This sequence belongs to the RuvA family. In terms of assembly, homotetramer. Forms an RuvA(8)-RuvB(12)-Holliday junction (HJ) complex. HJ DNA is sandwiched between 2 RuvA tetramers; dsDNA enters through RuvA and exits via RuvB. An RuvB hexamer assembles on each DNA strand where it exits the tetramer. Each RuvB hexamer is contacted by two RuvA subunits (via domain III) on 2 adjacent RuvB subunits; this complex drives branch migration. In the full resolvosome a probable DNA-RuvA(4)-RuvB(12)-RuvC(2) complex forms which resolves the HJ.

It localises to the cytoplasm. Its function is as follows. The RuvA-RuvB-RuvC complex processes Holliday junction (HJ) DNA during genetic recombination and DNA repair, while the RuvA-RuvB complex plays an important role in the rescue of blocked DNA replication forks via replication fork reversal (RFR). RuvA specifically binds to HJ cruciform DNA, conferring on it an open structure. The RuvB hexamer acts as an ATP-dependent pump, pulling dsDNA into and through the RuvAB complex. HJ branch migration allows RuvC to scan DNA until it finds its consensus sequence, where it cleaves and resolves the cruciform DNA. In Clostridium acetobutylicum (strain ATCC 824 / DSM 792 / JCM 1419 / IAM 19013 / LMG 5710 / NBRC 13948 / NRRL B-527 / VKM B-1787 / 2291 / W), this protein is Holliday junction branch migration complex subunit RuvA.